We begin with the raw amino-acid sequence, 303 residues long: Geranylgeranyl pyrophosphate synthase (303 aa).

Isopentenyl diphosphate-binding residues include Lys32, Arg35, and His64. Mg(2+)-binding residues include Asp71 and Asp75. Residue Arg80 coordinates dimethylallyl diphosphate. Arg81 contacts isopentenyl diphosphate. Residues Lys158, Thr159, Gln192, Lys209, and Lys219 each contribute to the dimethylallyl diphosphate site.

Belongs to the FPP/GGPP synthase family. Homooligomer. Mg(2+) is required as a cofactor.

The protein localises to the cytoplasm. The enzyme catalyses isopentenyl diphosphate + dimethylallyl diphosphate = (2E)-geranyl diphosphate + diphosphate. It catalyses the reaction isopentenyl diphosphate + (2E)-geranyl diphosphate = (2E,6E)-farnesyl diphosphate + diphosphate. The catalysed reaction is isopentenyl diphosphate + (2E,6E)-farnesyl diphosphate = (2E,6E,10E)-geranylgeranyl diphosphate + diphosphate. It functions in the pathway isoprenoid biosynthesis; farnesyl diphosphate biosynthesis; farnesyl diphosphate from geranyl diphosphate and isopentenyl diphosphate: step 1/1. The protein operates within isoprenoid biosynthesis; geranyl diphosphate biosynthesis; geranyl diphosphate from dimethylallyl diphosphate and isopentenyl diphosphate: step 1/1. It participates in isoprenoid biosynthesis; geranylgeranyl diphosphate biosynthesis; geranylgeranyl diphosphate from farnesyl diphosphate and isopentenyl diphosphate: step 1/1. Catalyzes the trans-addition of the three molecules of IPP onto DMAPP to form geranylgeranyl pyrophosphate, an important precursor of carotenoids and geranylated proteins. The polypeptide is Geranylgeranyl pyrophosphate synthase (ggps1) (Dictyostelium discoideum (Social amoeba)).